An 865-amino-acid polypeptide reads, in one-letter code: Protein translocase subunit SecA (865 aa).

Residues Gln93, 111–115, and Asp501 contribute to the ATP site; that span reads GEGKT. 4 residues coordinate Zn(2+): Cys841, Cys843, Cys852, and Cys853.

It belongs to the SecA family. As to quaternary structure, monomer and homodimer. Part of the essential Sec protein translocation apparatus which comprises SecA, SecYEG and auxiliary proteins SecDF-YajC and YidC. Zn(2+) serves as cofactor.

It localises to the cell inner membrane. The protein localises to the cytoplasm. It catalyses the reaction ATP + H2O + cellular proteinSide 1 = ADP + phosphate + cellular proteinSide 2.. In terms of biological role, part of the Sec protein translocase complex. Interacts with the SecYEG preprotein conducting channel. Has a central role in coupling the hydrolysis of ATP to the transfer of proteins into and across the cell membrane, serving as an ATP-driven molecular motor driving the stepwise translocation of polypeptide chains across the membrane. In Helicobacter pylori (strain J99 / ATCC 700824) (Campylobacter pylori J99), this protein is Protein translocase subunit SecA.